A 441-amino-acid chain; its full sequence is NADH-quinone oxidoreductase subunit D (441 aa).

The protein belongs to the complex I 49 kDa subunit family. As to quaternary structure, NDH-1 is composed of 14 different subunits. Subunits NuoB, C, D, E, F, and G constitute the peripheral sector of the complex.

It is found in the cell membrane. The enzyme catalyses a quinone + NADH + 5 H(+)(in) = a quinol + NAD(+) + 4 H(+)(out). NDH-1 shuttles electrons from NADH, via FMN and iron-sulfur (Fe-S) centers, to quinones in the respiratory chain. The immediate electron acceptor for the enzyme in this species is believed to be a menaquinone. Couples the redox reaction to proton translocation (for every two electrons transferred, four hydrogen ions are translocated across the cytoplasmic membrane), and thus conserves the redox energy in a proton gradient. In Mycobacterium avium (strain 104), this protein is NADH-quinone oxidoreductase subunit D.